The primary structure comprises 257 residues: MKSATSAQRPYQEVGAMIRDLIIKTPYNPGERLPPEREIAEMLDVTRTVVREALIMLEIKGLVEVRRGAGIYVLDNSGSQNTDSPDANVCNDAGPFELLQARQLLESNIAEFAALQATREDIVKMRQALQLEERELASSAPGSSESGDMQFHLAIAEATHNSMLVELFRQSWQWRENNPMWIQLHSHLDDSLYRKEWLGDHKQILAALIKKDARAAKLAMWQHLENVKQRLLEFSNVDDIYFDGYLFDSWPLDKVDA.

Residues 8–76 (QRPYQEVGAM…RGAGIYVLDN (69 aa)) enclose the HTH gntR-type domain. The segment at residues 36 to 55 (EREIAEMLDVTRTVVREALI) is a DNA-binding region (H-T-H motif).

Its function is as follows. Repressor for the uxuRBA operon. In Escherichia coli (strain K12), this protein is Uxu operon transcriptional regulator (uxuR).